The primary structure comprises 773 residues: Transducin-like enhancer protein 4 (773 aa).

Disordered stretches follow at residues 1–22 (MIRDLSKMYPQTRHPAPHQPAQ), 140–162 (HGHGLPVPLTPHPSGLQPPAIPP), and 182–357 (LPIK…DPLA). The tract at residues 1-136 (MIRDLSKMYP…AIIGQQLQAQ (136 aa)) is q domain. Residues 137 to 204 (HLSHGHGLPV…HQRDRDSIKS (68 aa)) form a GP domain region. Residues 183–202 (PIKDEKKHHDNDHQRDRDSI) are compositionally biased toward basic and acidic residues. Residues 203-214 (KSSSVSPSASFR) show a composition bias toward low complexity. The ccN domain stretch occupies residues 205-274 (SSVSPSASFR…SPRGSPAHSP (70 aa)). A phosphoserine mark is found at serine 208, serine 212, serine 216, and serine 222. Over residues 215 to 252 (GSEKHRNSTDYSSESKKQKTEEKEIAARYDSDGEKSDD) the composition is skewed to basic and acidic residues. N6-acetyllysine is present on lysine 237. At serine 245 the chain carries Phosphoserine. Residue serine 250 is modified to Phosphoserine; by CK2. Position 265 is a phosphoserine; by CDK1 (serine 265). A phosphoserine mark is found at serine 269 and serine 273. Over residues 273 to 289 (SPRENGLDKTRLLKKDA) the composition is skewed to basic and acidic residues. Residues 275 to 452 (RENGLDKTRL…PGGKPAYSFH (178 aa)) are SP domain. Lysine 281 is subject to N6-acetyllysine. The span at 290-305 (PISPASVASSSSTPSS) shows a compositional bias: low complexity. A Phosphoserine modification is found at serine 292. A compositionally biased stretch (polar residues) spans 317-328 (TTPVSKSNTPTP). Threonine 318 is subject to Phosphothreonine. 2 positions are modified to phosphoserine: serine 321 and serine 323. 4 positions are modified to phosphothreonine: threonine 325, threonine 327, threonine 334, and threonine 340. A Phosphoserine modification is found at serine 419. WD repeat units lie at residues 485-523 (NHGEVVCAVTISNPTRHVYTGGKGCVKVWDISHPGNKSP), 531-570 (NRDNYIRSCRLLPDGRTLIVGGEASTLSIWDLAAPTPRIK), 575-614 (SSAPACYALAISPDSKVCFSCCSDGNIAVWDLHNQTLVRQ), 617-656 (GHTDGASCIDISNDGTKLWTGGLDNTVRSWDLREGRQLQQ), 658-697 (DFTSQIFSLGYCPTGEWLAVGMENSNVEVLHVTKPDKYQL), 699-738 (LHESCVLSLKFAHCGKWFVSTGKDNLLNAWRTPYGASIFQ), and 740-773 (KESSSVLSCDISVDDKYIVTGSGDKKATVYEVIY).

The protein belongs to the WD repeat Groucho/TLE family. In terms of assembly, homooligomer and heterooligomer with other family members. Interacts with PAX5. Interacts with LEF1, TCF7, TCF7L1 and TCF7L2. Interacts with ZNF703; TLE4 may mediate ZNF703 transcriptional repression. Interacts with SIX3 and SIX6. Interacts with PAX2. Interacts with TLE1. In terms of processing, phosphorylated. PAX5 binding increases phosphorylation. Ubiquitinated by XIAP/BIRC4. Expressed in bone marrow-derived macrophages.

It localises to the nucleus. Transcriptional corepressor that binds to a number of transcription factors. Inhibits the transcriptional activation mediated by PAX5, and by CTNNB1 and TCF family members in Wnt signaling. The effects of full-length TLE family members may be modulated by association with dominant-negative AES. Essential for the transcriptional repressor activity of SIX3 during retina and lens development and for SIX3 transcriptional auto-repression. Involved in transcriptional repression of GNRHR and enhances MSX1-mediated transcriptional repression of CGA/alpha-GSU. This chain is Transducin-like enhancer protein 4 (Tle4), found in Mus musculus (Mouse).